A 144-amino-acid chain; its full sequence is uncharacterized protein (144 aa).

Positions 13-120 (IFCGIVEGNV…VPKYETGLGF (108 aa)) constitute an HIT domain. A Histidine triad motif motif is present at residues 105 to 109 (HYHMH).

This is an uncharacterized protein from Mycoplasma pneumoniae (strain ATCC 29342 / M129 / Subtype 1) (Mycoplasmoides pneumoniae).